A 442-amino-acid chain; its full sequence is Terpene cyclase aneC (442 aa).

Residues aspartate 196, asparagine 327, serine 331, and glutamate 335 each contribute to the Mg(2+) site. 2 residues coordinate (2E,6E)-farnesyl diphosphate: arginine 419 and tyrosine 420.

This sequence belongs to the terpene synthase family. In terms of assembly, homodimer. Requires Mg(2+) as cofactor.

It catalyses the reaction (2E,6E)-farnesyl diphosphate = dauca-4,7-diene + diphosphate. It functions in the pathway secondary metabolite biosynthesis. Terpene cyclase; part of the gene cluster that mediates the biosynthesis of aculenes, a unique type of norsesquiterpenes that contain a nordaucane skeleton linked to an L-proline moiety and are of mixed biosynthetic origin. The pathway begins with the synthesis of dauca-4,7-diene by the terpene cyclase aneC using farnesyl pyrophosphate (FPP) as substrate. The cytochrome P450 monooxygenase aneF then performs the initial oxidation at C-12 of dauca-4,7-diene to yield asperaculane D. Asperaculane D is substrate of the cytochrome P450 monooxygenase aneD for C-10 hydroxylation to yield asperaculane E. The cytochrome P450 monooxygenase aneG then converts asperaculane E into aculene D via C-2 oxidation. The monomodular nonribosomal peptide synthtase aneB adenylates L-proline and the thiohydrolase aneE transfers this activated L-proline derivative to aculenes D and C to produce respectively aculenes B and A. The dioxygenase aneA converts aculene D into aculene C, and aculene B into aculene A by introducing the 5,6-alkene moiety. Asperculanes A, B, C and F, as well as 14-prolyl asperculane C, might be shunt products of the pathway. The sequence is that of Terpene cyclase aneC from Aspergillus aculeatus (strain ATCC 16872 / CBS 172.66 / WB 5094).